A 328-amino-acid chain; its full sequence is Malate dehydrogenase (328 aa).

An NAD(+)-binding site is contributed by 12–18; sequence GAAGQIG. Positions 92 and 98 each coordinate substrate. NAD(+) contacts are provided by residues asparagine 105, glutamine 112, and 129–131; that span reads TGN. Positions 131 and 162 each coordinate substrate. Histidine 187 serves as the catalytic Proton acceptor.

Belongs to the LDH/MDH superfamily. MDH type 2 family.

It catalyses the reaction (S)-malate + NAD(+) = oxaloacetate + NADH + H(+). Functionally, catalyzes the reversible oxidation of malate to oxaloacetate. The polypeptide is Malate dehydrogenase (Nocardioides sp. (strain ATCC BAA-499 / JS614)).